The primary structure comprises 140 residues: uncharacterized protein (140 aa).

The next 3 helical transmembrane spans lie at 42-62, 65-85, and 96-116; these read AFLF…IFAS, ASFL…SALG, and RASD…MLCF.

The protein resides in the membrane. This is an uncharacterized protein from Saccharomyces cerevisiae (strain ATCC 204508 / S288c) (Baker's yeast).